Consider the following 414-residue polypeptide: Putative ankyrin repeat protein BB_B28 (414 aa).

ANK repeat units follow at residues 326-355 (NGNPIFTYAINVKAKSIINYLITKEFNINL) and 359-389 (NSQTALHSAIIQKYDLNFIKSLIEKGANPNI).

This is Putative ankyrin repeat protein BB_B28 from Borreliella burgdorferi (strain ATCC 35210 / DSM 4680 / CIP 102532 / B31) (Borrelia burgdorferi).